The chain runs to 309 residues: uncharacterized protein (309 aa).

A helical transmembrane segment spans residues 23 to 43; it reads ALVLSSIVNILLLLLIYSTVF.

The protein belongs to the chlamydial CPn_0593/CT_474/TC_0759 family.

The protein localises to the membrane. This is an uncharacterized protein from Chlamydia trachomatis serovar D (strain ATCC VR-885 / DSM 19411 / UW-3/Cx).